The primary structure comprises 435 residues: Serine--tRNA ligase (435 aa).

234-236 (TAE) is a binding site for L-serine. 265–267 (RRE) serves as a coordination point for ATP. Glutamate 288 provides a ligand contact to L-serine. 352 to 355 (EISS) contributes to the ATP binding site. Serine 388 is an L-serine binding site.

This sequence belongs to the class-II aminoacyl-tRNA synthetase family. Type-1 seryl-tRNA synthetase subfamily. As to quaternary structure, homodimer. The tRNA molecule binds across the dimer.

The protein localises to the cytoplasm. The catalysed reaction is tRNA(Ser) + L-serine + ATP = L-seryl-tRNA(Ser) + AMP + diphosphate + H(+). The enzyme catalyses tRNA(Sec) + L-serine + ATP = L-seryl-tRNA(Sec) + AMP + diphosphate + H(+). It participates in aminoacyl-tRNA biosynthesis; selenocysteinyl-tRNA(Sec) biosynthesis; L-seryl-tRNA(Sec) from L-serine and tRNA(Sec): step 1/1. Catalyzes the attachment of serine to tRNA(Ser). Is also able to aminoacylate tRNA(Sec) with serine, to form the misacylated tRNA L-seryl-tRNA(Sec), which will be further converted into selenocysteinyl-tRNA(Sec). This chain is Serine--tRNA ligase, found in Synechococcus sp. (strain JA-2-3B'a(2-13)) (Cyanobacteria bacterium Yellowstone B-Prime).